We begin with the raw amino-acid sequence, 572 residues long: MYSTSLLRWLVVALVSAVPLVTAYGFVPYPQNDAFYYPPDGWQNTERGDILKDRKIQAATLGILKWNLDAWQVLYRTSGARPNTPSYTVTTVLVPYNAKRDHVVTIASPENSNFIQCAPSYAFRHTGVLEIANFEPRWEQMLYTLFLAEGWVVNAPDHEGPESAFSAGRLGGHMMLDSMRALQKYGPLNIPDNAMHIGHGYSGGSTPTGWAASLLERYAPELNVVGWSMGGSMTDPLYTLDSLDGNPTSSLVLAGALGIVDAYRDEVGNYLHDNVLTDEGKIAEKVMRNSCVYEAVIRYFGATFQSERYMKDGRKLSSFPELTHLTDMNTMGRYPQYTPKKPFRMFHALHDEEIAWHQANKTAVEWCNNGANVNFITFSSNDLVHVTTYLWNLPYLVQYMRDRFSNKDFYGGNCQFDVEPNNPLFDTSILGERFKELLEAVLDILGKKIGPKDSIILNMIKSGKNPNKGGVWNDVLKSTTVSPGEGGNKSPESKKATKKYKSESKAEKKQPDSIPSSSSKSSSDNKSAHAKYHAHGHGHGHASSNSNNGHSHSAKESSTSKGSSRRHVARFM.

Residues 1–23 (MYSTSLLRWLVVALVSAVPLVTA) form the signal peptide. Cysteine 117 and cysteine 291 are oxidised to a cystine. The active-site Nucleophile is the serine 202. Aspartate 351 is a catalytic residue. A glycan (N-linked (GlcNAc...) asparagine) is linked at asparagine 360. The active site involves histidine 385. The segment at 468–572 (KGGVWNDVLK…SSRRHVARFM (105 aa)) is disordered. Residues 491-511 (PESKKATKKYKSESKAEKKQP) are compositionally biased toward basic and acidic residues. A compositionally biased stretch (low complexity) spans 512–525 (DSIPSSSSKSSSDN). N-linked (GlcNAc...) asparagine glycosylation occurs at asparagine 525. Residues 528 to 540 (AHAKYHAHGHGHG) are compositionally biased toward basic residues. Positions 541–562 (HASSNSNNGHSHSAKESSTSKG) are enriched in low complexity. Basic residues predominate over residues 563-572 (SSRRHVARFM).

The protein belongs to the AB hydrolase superfamily. Lipase family. Class Lip subfamily.

It localises to the secreted. It is found in the cell wall. The enzyme catalyses a triacylglycerol + H2O = a diacylglycerol + a fatty acid + H(+). The catalysed reaction is a monoacylglycerol + H2O = glycerol + a fatty acid + H(+). It catalyses the reaction a diacylglycerol + H2O = a monoacylglycerol + a fatty acid + H(+). Secreted lipase involved in Dandruff and seborrheic dermatitis (D/SD) probably via lipase-mediated breakdown of sebaceous lipids and release of irritating free fatty acids. Shows only minimal activity against triolein. Mostly converts monoolein to di- and triolein, while free fatty acids are only produced in low amounts. This chain is Secreted triacylglycerol lipase LIP6, found in Malassezia globosa (strain ATCC MYA-4612 / CBS 7966) (Dandruff-associated fungus).